A 95-amino-acid polypeptide reads, in one-letter code: Defensin-1 (95 aa).

A signal peptide spans 1 to 19 (MKIYFIVGLLFMAMVAIMA). A propeptide spanning residues 20–43 (APVEDEFEPLEHFENEERADRHRR) is cleaved from the precursor. 3 cysteine pairs are disulfide-bonded: Cys-46/Cys-74, Cys-60/Cys-79, and Cys-64/Cys-81. A Phenylalanine amide modification is found at Phe-94.

It is found in the secreted. Found in royal jelly and in hemolymph, potent antibacterial protein against Gram-positive bacteria at low concentration. This Apis mellifera carnica (Carniolan honeybee) protein is Defensin-1.